The chain runs to 253 residues: MTHGAVAPIQPWLVCLHGLFGSGEDWSPVLPFFRDWPMLLVDLPGHGASRAITTADFAEVSRQLTATLLEQGIERYWLLGYSLGGRIAMYHACEGHHDGMLGLLVEGGHPGLATPEQRTERIHHDARWAQRFRQDPLPEALQDWYQQAVFADIDSVQREQLIARRSANHGASVAAMLEATSLGRQPFLAARLQHLSIPFIYLCGASDVKFQTLAAQYGLPLLSVALAGHNAHQANPAAYAERVRTFLSHPVKD.

The region spanning 11–147 (PWLVCLHGLF…PEALQDWYQQ (137 aa)) is the AB hydrolase-1 domain.

It belongs to the AB hydrolase superfamily. MenH family. Monomer.

The enzyme catalyses 5-enolpyruvoyl-6-hydroxy-2-succinyl-cyclohex-3-ene-1-carboxylate = (1R,6R)-6-hydroxy-2-succinyl-cyclohexa-2,4-diene-1-carboxylate + pyruvate. The protein operates within quinol/quinone metabolism; 1,4-dihydroxy-2-naphthoate biosynthesis; 1,4-dihydroxy-2-naphthoate from chorismate: step 3/7. It functions in the pathway quinol/quinone metabolism; menaquinone biosynthesis. In terms of biological role, catalyzes a proton abstraction reaction that results in 2,5-elimination of pyruvate from 2-succinyl-5-enolpyruvyl-6-hydroxy-3-cyclohexene-1-carboxylate (SEPHCHC) and the formation of 2-succinyl-6-hydroxy-2,4-cyclohexadiene-1-carboxylate (SHCHC). This is 2-succinyl-6-hydroxy-2,4-cyclohexadiene-1-carboxylate synthase from Pectobacterium atrosepticum (strain SCRI 1043 / ATCC BAA-672) (Erwinia carotovora subsp. atroseptica).